The sequence spans 374 residues: Alcohol dehydrogenase class-3 (374 aa).

The residue at position 2 (Ser-2) is an N-acetylserine. Positions 45, 67, 97, 100, 103, 111, and 174 each coordinate Zn(2+). Position 233 is an N6-succinyllysine (Lys-233). A Phosphoserine modification is found at Ser-247. Lys-315 carries the N6-succinyllysine modification. 2 positions are modified to phosphoserine: Ser-324 and Ser-351.

It belongs to the zinc-containing alcohol dehydrogenase family. Class-III subfamily. In terms of assembly, homodimer. Zn(2+) is required as a cofactor.

The protein resides in the cytoplasm. The catalysed reaction is a primary alcohol + NAD(+) = an aldehyde + NADH + H(+). It catalyses the reaction a secondary alcohol + NAD(+) = a ketone + NADH + H(+). The enzyme catalyses S-(hydroxymethyl)glutathione + NADP(+) = S-formylglutathione + NADPH + H(+). It carries out the reaction S-(hydroxymethyl)glutathione + NAD(+) = S-formylglutathione + NADH + H(+). The catalysed reaction is 20-oxo-(5Z,8Z,11Z,14Z)-eicosatetraenoate + NAD(+) + H2O = (5Z,8Z,11Z,14Z)-eicosatetraenedioate + NADH + 2 H(+). It catalyses the reaction 20-hydroxy-(5Z,8Z,11Z,14Z)-eicosatetraenoate + NAD(+) = 20-oxo-(5Z,8Z,11Z,14Z)-eicosatetraenoate + NADH + H(+). The enzyme catalyses S-nitrosoglutathione + NADH + H(+) = S-(hydroxysulfenamide)glutathione + NAD(+). Catalyzes the oxidation of long-chain primary alcohols and the oxidation of S-(hydroxymethyl) glutathione. Also oxidizes long chain omega-hydroxy fatty acids, such as 20-HETE, producing both the intermediate aldehyde, 20-oxoarachidonate and the end product, a dicarboxylic acid, (5Z,8Z,11Z,14Z)-eicosatetraenedioate. Class-III ADH is remarkably ineffective in oxidizing ethanol. Required for clearance of cellular formaldehyde, a cytotoxic and carcinogenic metabolite that induces DNA damage. Also acts as a S-nitroso-glutathione reductase by catalyzing the NADH-dependent reduction of S-nitrosoglutathione, thereby regulating protein S-nitrosylation. The sequence is that of Alcohol dehydrogenase class-3 from Equus caballus (Horse).